A 389-amino-acid chain; its full sequence is Succinate--CoA ligase [ADP-forming] subunit beta (389 aa).

The region spanning 9 to 244 (KELLRQFNVP…IDEEDAAEIE (236 aa)) is the ATP-grasp domain. ATP-binding positions include lysine 46, 53–55 (GRG), glutamate 99, alanine 102, and glutamate 107. Residues asparagine 199 and aspartate 213 each coordinate Mg(2+). Substrate contacts are provided by residues asparagine 264 and 321 to 323 (GIM).

It belongs to the succinate/malate CoA ligase beta subunit family. Heterotetramer of two alpha and two beta subunits. Mg(2+) is required as a cofactor.

It catalyses the reaction succinate + ATP + CoA = succinyl-CoA + ADP + phosphate. The enzyme catalyses GTP + succinate + CoA = succinyl-CoA + GDP + phosphate. The protein operates within carbohydrate metabolism; tricarboxylic acid cycle; succinate from succinyl-CoA (ligase route): step 1/1. Functionally, succinyl-CoA synthetase functions in the citric acid cycle (TCA), coupling the hydrolysis of succinyl-CoA to the synthesis of either ATP or GTP and thus represents the only step of substrate-level phosphorylation in the TCA. The beta subunit provides nucleotide specificity of the enzyme and binds the substrate succinate, while the binding sites for coenzyme A and phosphate are found in the alpha subunit. The chain is Succinate--CoA ligase [ADP-forming] subunit beta from Polynucleobacter necessarius subsp. necessarius (strain STIR1).